The following is a 749-amino-acid chain: Protein lin-54 homolog (749 aa).

Residue Lys139 forms a Glycyl lysine isopeptide (Lys-Gly) (interchain with G-Cter in SUMO2) linkage. Residues Lys244 and Lys249 each carry the N6-acetyllysine modification. Phosphoserine occurs at positions 264, 282, 310, and 314. Residue Lys357 forms a Glycyl lysine isopeptide (Lys-Gly) (interchain with G-Cter in SUMO2) linkage. Positions 521–634 (PRKPCNCTKS…KCIGCKNFEE (114 aa)) constitute a CRC domain. The interval 523–536 (KPCNCTKSLCLKLY) is DNA-binding. Zn(2+) contacts are provided by Cys525, Cys527, Cys532, Cys537, Cys539, Cys546, Cys549, Cys551, and Cys554. The tract at residues 583 to 596 (IGKGKEGESDRRHS) is linker. Zn(2+)-binding residues include Cys599, Cys601, Cys606, Cys611, Cys613, Cys620, Cys624, Cys626, and Cys629. The tract at residues 599–612 (CNCKRSGCLKNYCE) is DNA-binding. A Phosphoserine modification is found at Ser635. Residues Lys639, Lys659, and Lys661 each participate in a glycyl lysine isopeptide (Lys-Gly) (interchain with G-Cter in SUMO2) cross-link.

It belongs to the lin-54 family. Component of the DREAM complex (also named LINC complex) at least composed of E2F4, E2F5, LIN9, LIN37, LIN52, LIN54, MYBL1, MYBL2, RBL1, RBL2, RBBP4, RBL2, TFDP1 and TFDP2. The complex exists in quiescent cells where it represses cell cycle-dependent genes. It dissociates in S phase when LIN9, LIN37, LIN52 and LIN54 form a subcomplex that binds to MYBL2.

Its subcellular location is the nucleus. Its function is as follows. Component of the DREAM complex, a multiprotein complex that can both act as a transcription activator or repressor depending on the context. In G0 phase, the complex binds to more than 800 promoters and is required for repression of E2F target genes. In S phase, the complex selectively binds to the promoters of G2/M genes whose products are required for mitosis and participates in their cell cycle dependent activation. In the complex, acts as a DNA-binding protein that binds the promoter of CDK1 in a sequence-specific manner. Specifically recognizes the consensus motif 5'-TTYRAA-3' in target DNA. The chain is Protein lin-54 homolog (Lin54) from Rattus norvegicus (Rat).